The sequence spans 242 residues: MNVAGYISLLVILSLLIGYLFGSIMFADVASMILKRNVRELGSKNPGTTNSFRVFPKKVAIAIGFFEIIKSVIPFSIILLIYKYGLQPELTKLDPSVINKTYYLTYLAPLAAIFGHMYPVYFKFNGGKAVATTAGFVFVVSPWWFLIIALTWWTITLISKYVSLASIVCFIIFLFLPYIPWLDYLWWFSLDKITFLTYQSDWYIIVFFAIANTILSTIIIWKHRGNIVRLINKQENKITKKV.

The next 6 helical transmembrane spans lie at 7-27 (ISLLVILSLLIGYLFGSIMFA), 61-81 (IAIGFFEIIKSVIPFSIILLI), 102-122 (YYLTYLAPLAAIFGHMYPVYF), 135-155 (GFVFVVSPWWFLIIALTWWTI), 162-182 (VSLASIVCFIIFLFLPYIPWL), and 201-221 (DWYIIVFFAIANTILSTIIIW).

This sequence belongs to the PlsY family. In terms of assembly, probably interacts with PlsX.

The protein localises to the cell membrane. The catalysed reaction is an acyl phosphate + sn-glycerol 3-phosphate = a 1-acyl-sn-glycero-3-phosphate + phosphate. Its pathway is lipid metabolism; phospholipid metabolism. In terms of biological role, catalyzes the transfer of an acyl group from acyl-phosphate (acyl-PO(4)) to glycerol-3-phosphate (G3P) to form lysophosphatidic acid (LPA). This enzyme utilizes acyl-phosphate as fatty acyl donor, but not acyl-CoA or acyl-ACP. The protein is Glycerol-3-phosphate acyltransferase of Mycoplasmoides gallisepticum (strain R(low / passage 15 / clone 2)) (Mycoplasma gallisepticum).